Reading from the N-terminus, the 491-residue chain is Transmembrane protein 39B (491 aa).

The segment at 1–56 is disordered; sequence MAGGRRGANRTTYCRSPLSNDTGSVGNGNHSTSSPVTGVRSRTRNGSGTGMSSPPL. 4 N-linked (GlcNAc...) asparagine glycosylation sites follow: asparagine 9, asparagine 20, asparagine 29, and asparagine 45. Composition is skewed to polar residues over residues 9–36 and 44–56; these read NRTTYCRSPLSNDTGSVGNGNHSTSSPV and RNGSGTGMSSPPL. A run of 8 helical transmembrane segments spans residues 79 to 99, 115 to 135, 152 to 172, 185 to 205, 290 to 310, 322 to 342, 423 to 443, and 449 to 469; these read LFELHLFACHLIALFVHYVNI, TSLNFHLIDYNMLVFTVIVLA, LSFPHSVFLVTARFAVLTLAG, TYSVLSLLFLCYPFGMYIPFF, EVLVSSMLSAYYVAFVPVWFV, CELFILVSVSTSVILMRHLLP, ILNILIILEGAMIFYQLYSLM, and HQTISLALILFSNYYAFFKLL.

The protein belongs to the TMEM39 family. As to expression, expressed in the ovary, followed by the intestine and brain.

It localises to the endoplasmic reticulum membrane. Functionally, may protect the cells against DNA damage caused by exposure to the cold-warming stress and facilitates tissue damage repair during the recovery phase. The chain is Transmembrane protein 39B from Danio rerio (Zebrafish).